The chain runs to 60 residues: MANKVIQLQKIFQSSTKPLWWRHPRSALYLYPFYAIFAVAVVTPLLYIPNAIRGIKAKKA.

At 2–29 (ANKVIQLQKIFQSSTKPLWWRHPRSALY) the chain is on the mitochondrial matrix side. Residues 30-53 (LYPFYAIFAVAVVTPLLYIPNAIR) traverse the membrane as a helical segment. Residues 54–60 (GIKAKKA) lie on the Mitochondrial intermembrane side of the membrane.

Belongs to the cytochrome c oxidase VIIa family. Component of the cytochrome c oxidase (complex IV, CIV), a multisubunit enzyme composed of 12 subunits. The complex is composed of a catalytic core of 3 subunits COX1, COX2 and COX3, encoded in the mitochondrial DNA, and 9 supernumerary subunits COX4, COX5A (or COX5B), COX6, COX7, COX8, COX9, COX12, COX13 and COX26, which are encoded in the nuclear genome. The complex exists as a monomer or a dimer and forms supercomplexes (SCs) in the inner mitochondrial membrane with a dimer of ubiquinol-cytochrome c oxidoreductase (cytochrome b-c1 complex, complex III, CIII), resulting in 2 different assemblies (supercomplexes III(2)IV and III(2)IV(2)).

The protein localises to the mitochondrion inner membrane. It participates in energy metabolism; oxidative phosphorylation. Functionally, component of the cytochrome c oxidase, the last enzyme in the mitochondrial electron transport chain which drives oxidative phosphorylation. The respiratory chain contains 3 multisubunit complexes succinate dehydrogenase (complex II, CII), ubiquinol-cytochrome c oxidoreductase (cytochrome b-c1 complex, complex III, CIII) and cytochrome c oxidase (complex IV, CIV), that cooperate to transfer electrons derived from NADH and succinate to molecular oxygen, creating an electrochemical gradient over the inner membrane that drives transmembrane transport and the ATP synthase. Cytochrome c oxidase is the component of the respiratory chain that catalyzes the reduction of oxygen to water. Electrons originating from reduced cytochrome c in the intermembrane space (IMS) are transferred via the dinuclear copper A center (CU(A)) of COX2 and heme A of COX1 to the active site in COX1, a binuclear center (BNC) formed by heme A3 and copper B (CU(B)). The BNC reduces molecular oxygen to 2 water molecules using 4 electrons from cytochrome c in the IMS and 4 protons from the mitochondrial matrix. This chain is Cytochrome c oxidase subunit 7, mitochondrial (COX7), found in Saccharomyces cerevisiae (strain ATCC 204508 / S288c) (Baker's yeast).